The chain runs to 443 residues: Tubulin beta chain (443 aa).

Positions 11, 69, 138, 142, 143, 144, 204, and 226 each coordinate GTP. A Mg(2+)-binding site is contributed by Glu69. The segment at Glu421–Asn443 is disordered. The segment covering Ser429 to Asn443 has biased composition (acidic residues).

Belongs to the tubulin family. In terms of assembly, dimer of alpha and beta chains. A typical microtubule is a hollow water-filled tube with an outer diameter of 25 nm and an inner diameter of 15 nM. Alpha-beta heterodimers associate head-to-tail to form protofilaments running lengthwise along the microtubule wall with the beta-tubulin subunit facing the microtubule plus end conferring a structural polarity. Microtubules usually have 13 protofilaments but different protofilament numbers can be found in some organisms and specialized cells. Mg(2+) is required as a cofactor.

The protein resides in the cytoplasm. The protein localises to the cytoskeleton. Its function is as follows. Tubulin is the major constituent of microtubules, a cylinder consisting of laterally associated linear protofilaments composed of alpha- and beta-tubulin heterodimers. Microtubules grow by the addition of GTP-tubulin dimers to the microtubule end, where a stabilizing cap forms. Below the cap, tubulin dimers are in GDP-bound state, owing to GTPase activity of alpha-tubulin. This is Tubulin beta chain (TUBB1) from Polytomella agilis (Quadriflagellate alga).